The chain runs to 87 residues: Small ribosomal subunit protein bS20 (87 aa).

Positions 1 to 24 are disordered; sequence MANTAQARKRARQSVERNKHNSSL.

Belongs to the bacterial ribosomal protein bS20 family.

In terms of biological role, binds directly to 16S ribosomal RNA. This Bordetella avium (strain 197N) protein is Small ribosomal subunit protein bS20.